We begin with the raw amino-acid sequence, 589 residues long: CTP synthase (589 aa).

Residues 1–281 form an amidoligase domain region; sequence MPQSRTHSRT…DAYVVRQLGL (281 aa). S23 contacts CTP. Position 23 (S23) interacts with UTP. ATP is bound by residues 24-29 and D81; that span reads SLGKGL. D81 and E155 together coordinate Mg(2+). Residues 162-164, 202-207, and K238 contribute to the CTP site; these read DIE and KTKPTQ. UTP contacts are provided by residues 202 to 207 and K238; that span reads KTKPTQ. A Glutamine amidotransferase type-1 domain is found at 306–554; it reads RIALVGKYVD…VDAALRHKLE (249 aa). G369 is a binding site for L-glutamine. C396 functions as the Nucleophile; for glutamine hydrolysis in the catalytic mechanism. L-glutamine contacts are provided by residues 397-400, E419, and R480; that span reads LGLQ. Active-site residues include H527 and E529. The tract at residues 562 to 589 is disordered; that stretch reads HGEERAAADDEIAESADRDEVASVDSAG.

The protein belongs to the CTP synthase family. As to quaternary structure, homotetramer.

It carries out the reaction UTP + L-glutamine + ATP + H2O = CTP + L-glutamate + ADP + phosphate + 2 H(+). The catalysed reaction is L-glutamine + H2O = L-glutamate + NH4(+). The enzyme catalyses UTP + NH4(+) + ATP = CTP + ADP + phosphate + 2 H(+). It participates in pyrimidine metabolism; CTP biosynthesis via de novo pathway; CTP from UDP: step 2/2. Its activity is regulated as follows. Allosterically activated by GTP, when glutamine is the substrate; GTP has no effect on the reaction when ammonia is the substrate. The allosteric effector GTP functions by stabilizing the protein conformation that binds the tetrahedral intermediate(s) formed during glutamine hydrolysis. Inhibited by the product CTP, via allosteric rather than competitive inhibition. Functionally, catalyzes the ATP-dependent amination of UTP to CTP with either L-glutamine or ammonia as the source of nitrogen. Regulates intracellular CTP levels through interactions with the four ribonucleotide triphosphates. The protein is CTP synthase of Rhodococcus opacus (strain B4).